A 309-amino-acid chain; its full sequence is Lipoyl synthase (309 aa).

7 residues coordinate [4Fe-4S] cluster: C43, C48, C54, C70, C74, C77, and S283. In terms of domain architecture, Radical SAM core spans 56–272 (AVRKTATFMI…KEIAMQKGFS (217 aa)).

It belongs to the radical SAM superfamily. Lipoyl synthase family. Requires [4Fe-4S] cluster as cofactor.

The protein localises to the cytoplasm. The enzyme catalyses [[Fe-S] cluster scaffold protein carrying a second [4Fe-4S](2+) cluster] + N(6)-octanoyl-L-lysyl-[protein] + 2 oxidized [2Fe-2S]-[ferredoxin] + 2 S-adenosyl-L-methionine + 4 H(+) = [[Fe-S] cluster scaffold protein] + N(6)-[(R)-dihydrolipoyl]-L-lysyl-[protein] + 4 Fe(3+) + 2 hydrogen sulfide + 2 5'-deoxyadenosine + 2 L-methionine + 2 reduced [2Fe-2S]-[ferredoxin]. It functions in the pathway protein modification; protein lipoylation via endogenous pathway; protein N(6)-(lipoyl)lysine from octanoyl-[acyl-carrier-protein]. Its function is as follows. Catalyzes the radical-mediated insertion of two sulfur atoms into the C-6 and C-8 positions of the octanoyl moiety bound to the lipoyl domains of lipoate-dependent enzymes, thereby converting the octanoylated domains into lipoylated derivatives. The protein is Lipoyl synthase of Shouchella clausii (strain KSM-K16) (Alkalihalobacillus clausii).